Reading from the N-terminus, the 821-residue chain is Fibroblast growth factor receptor 2 (821 aa).

An N-terminal signal peptide occupies residues 1–21 (MVSWGRFICLVLVTMATLSLA). The Extracellular portion of the chain corresponds to 22-377 (RPSFSLVEDT…EITASPDYLE (356 aa)). Residues 25-125 (FSLVEDTTLE…ETWIFMVNVT (101 aa)) form the Ig-like C2-type 1 domain. Cys62 and Cys107 are disulfide-bonded. Asn83 and Asn123 each carry an N-linked (GlcNAc...) asparagine glycan. Positions 129 to 151 (SSGDDEDDTDSSEDVVSENRSNQ) are disordered. Positions 131–144 (GDDEDDTDSSEDVV) are enriched in acidic residues. A glycan (N-linked (GlcNAc...) asparagine) is linked at Asn147. Ig-like C2-type domains lie at 154 to 247 (PYWT…YHLD) and 256 to 358 (PILQ…AWLT). The tract at residues 161 to 178 (KMEKRLHACPAANTVKFR) is heparin-binding. Cys179 and Cys231 are joined by a disulfide. Asn228, Asn241, Asn265, Asn297, Asn318, and Asn331 each carry an N-linked (GlcNAc...) asparagine glycan. A disulfide bond links Cys278 and Cys342. Residues 378–398 (IAIYCIGVFLIACMVVTVIFC) traverse the membrane as a helical segment. The Cytoplasmic segment spans residues 399 to 821 (RMKTTTKKPD…YPHINGSVKT (423 aa)). Position 466 is a phosphotyrosine; by autocatalysis (Tyr466). Residues 481-770 (LTLGKPLGEG…LTLTTNEEYL (290 aa)) form the Protein kinase domain. Residues 487–495 (LGEGCFGQV), Lys517, 565–567 (EYA), and Asn571 contribute to the ATP site. Tyr586 and Tyr588 each carry phosphotyrosine; by autocatalysis. Residue Asp626 is the Proton acceptor of the active site. 3 positions are modified to phosphotyrosine; by autocatalysis: Tyr656, Tyr657, and Tyr769. Ser780 is modified (phosphoserine).

This sequence belongs to the protein kinase superfamily. Tyr protein kinase family. Fibroblast growth factor receptor subfamily. Monomer. Homodimer after ligand binding. Interacts predominantly with FGF1 and FGF2, but can also interact with FGF3, FGF4, FGF6, FGF7, FGF8, FGF9, FGF10, FGF17, FGF18 and FGF22 (in vitro). Ligand specificity is determined by tissue-specific expression of isoforms, and differences in the third Ig-like domain are crucial for ligand specificity. Affinity for fibroblast growth factors (FGFs) is increased by heparan sulfate glycosaminoglycans that function as coreceptors. Likewise, KLB increases the affinity for FGF19 and FGF21. Interacts with PLCG1. Interacts with GRB2 and PAK4. Interacts with FLRT2. In terms of processing, autophosphorylated. Binding of FGF family members together with heparan sulfate proteoglycan or heparin promotes receptor dimerization and autophosphorylation on tyrosine residues. Autophosphorylation occurs in trans between the two FGFR molecules present in the dimer. N-glycosylated in the endoplasmic reticulum. The N-glycan chains undergo further maturation to an Endo H-resistant form in the Golgi apparatus. Post-translationally, ubiquitinated. FGFR2 is rapidly ubiquitinated after autophosphorylation, leading to internalization and degradation. Subject to degradation both in lysosomes and by the proteasome.

It is found in the cell membrane. Its subcellular location is the golgi apparatus. The protein resides in the cytoplasmic vesicle. It carries out the reaction L-tyrosyl-[protein] + ATP = O-phospho-L-tyrosyl-[protein] + ADP + H(+). Present in an inactive conformation in the absence of bound ligand. Ligand binding leads to dimerization and activation by autophosphorylation on tyrosine residues. Its function is as follows. Tyrosine-protein kinase that acts as a cell-surface receptor for fibroblast growth factors and plays an essential role in the regulation of cell proliferation, differentiation, migration and apoptosis, and in the regulation of embryonic development. Required for normal embryonic patterning, trophoblast function, limb bud development, lung morphogenesis, osteogenesis and skin development. Plays an essential role in the regulation of osteoblast differentiation, proliferation and apoptosis, and is required for normal skeleton development. Promotes cell proliferation in keratinocytes and immature osteoblasts, but promotes apoptosis in differentiated osteoblasts. Phosphorylates PLCG1, FRS2 and PAK4. Ligand binding leads to the activation of several signaling cascades. Activation of PLCG1 leads to the production of the cellular signaling molecules diacylglycerol and inositol 1,4,5-trisphosphate. Phosphorylation of FRS2 triggers recruitment of GRB2, GAB1, PIK3R1 and SOS1, and mediates activation of RAS, MAPK1/ERK2, MAPK3/ERK1 and the MAP kinase signaling pathway, as well as of the AKT1 signaling pathway. FGFR2 signaling is down-regulated by ubiquitination, internalization and degradation. Mutations that lead to constitutive kinase activation or impair normal FGFR2 maturation, internalization and degradation lead to aberrant signaling. Over-expressed FGFR2 promotes activation of STAT1. In Mus musculus (Mouse), this protein is Fibroblast growth factor receptor 2 (Fgfr2).